The primary structure comprises 296 residues: Probable endonuclease 4 (296 aa).

Zn(2+) is bound by residues His68, His108, Glu145, Asp179, His182, His216, Asp229, His231, and Glu261.

The protein belongs to the AP endonuclease 2 family. Zn(2+) serves as cofactor.

The enzyme catalyses Endonucleolytic cleavage to 5'-phosphooligonucleotide end-products.. Functionally, endonuclease IV plays a role in DNA repair. It cleaves phosphodiester bonds at apurinic or apyrimidinic (AP) sites, generating a 3'-hydroxyl group and a 5'-terminal sugar phosphate. The polypeptide is Probable endonuclease 4 (Geobacter sulfurreducens (strain ATCC 51573 / DSM 12127 / PCA)).